The chain runs to 382 residues: Ribosomal RNA large subunit methyltransferase G (382 aa).

It belongs to the methyltransferase superfamily. RlmG family.

It localises to the cytoplasm. It catalyses the reaction guanosine(1835) in 23S rRNA + S-adenosyl-L-methionine = N(2)-methylguanosine(1835) in 23S rRNA + S-adenosyl-L-homocysteine + H(+). Its function is as follows. Specifically methylates the guanine in position 1835 (m2G1835) of 23S rRNA. This is Ribosomal RNA large subunit methyltransferase G from Aliivibrio fischeri (strain ATCC 700601 / ES114) (Vibrio fischeri).